Here is a 265-residue protein sequence, read N- to C-terminus: Orotidine 5'-phosphate decarboxylase (265 aa).

Substrate contacts are provided by residues D37, K59–H61, D91–T100, Y217, and R235. The active-site Proton donor is K93.

The protein belongs to the OMP decarboxylase family.

The enzyme catalyses orotidine 5'-phosphate + H(+) = UMP + CO2. It functions in the pathway pyrimidine metabolism; UMP biosynthesis via de novo pathway; UMP from orotate: step 2/2. This is Orotidine 5'-phosphate decarboxylase (URA3) from Candida glabrata (strain ATCC 2001 / BCRC 20586 / JCM 3761 / NBRC 0622 / NRRL Y-65 / CBS 138) (Yeast).